Consider the following 270-residue polypeptide: Bifunctional folate synthesis protein (270 aa).

A DHNA region spans residues 1–119 (MDQLQIKDLE…TCSVTIHRRK (119 aa)). Residues E21, Y53, and 72 to 73 (IE) contribute to the substrate site. K99 acts as the Proton donor/acceptor; for DHNA activity in catalysis. Positions 120 to 270 (QRAFIALGSN…IRNLYDALKK (151 aa)) are HPPK. ATP is bound by residues 160 to 163 (TEPW), 171 to 173 (FAN), 192 to 195 (LAIE), 200 to 215 (RVREVHWGPRLIDLDL), 227 to 233 (DLILPHP), and 238 to 240 (RLF). 2 residues coordinate Mg(2+): D212 and D214.

The protein in the N-terminal section; belongs to the DHNA family. This sequence in the C-terminal section; belongs to the HPPK family. Homotrimer or homotetramer.

It catalyses the reaction 7,8-dihydroneopterin = 6-hydroxymethyl-7,8-dihydropterin + glycolaldehyde. It carries out the reaction 6-hydroxymethyl-7,8-dihydropterin + ATP = (7,8-dihydropterin-6-yl)methyl diphosphate + AMP + H(+). The protein operates within cofactor biosynthesis; tetrahydrofolate biosynthesis; 2-amino-4-hydroxy-6-hydroxymethyl-7,8-dihydropteridine diphosphate from 7,8-dihydroneopterin triphosphate: step 3/4. It functions in the pathway cofactor biosynthesis; tetrahydrofolate biosynthesis; 2-amino-4-hydroxy-6-hydroxymethyl-7,8-dihydropteridine diphosphate from 7,8-dihydroneopterin triphosphate: step 4/4. In terms of biological role, catalyzes two sequential steps of tetrahydrofolate biosynthesis, the conversion of 7,8-dihydroneopterin to 6-hydroxymethyl-7,8-dihydropterin diphosphate. This is Bifunctional folate synthesis protein from Streptococcus pneumoniae serotype 4 (strain ATCC BAA-334 / TIGR4).